The primary structure comprises 311 residues: MKITIFGGGAWGQALAFAFAQKNEVQIVSRRNISTALMPLNEILNKNSHRIILQSSLEESLNSELFVIAISVQALREWFIRARLNQNSKILIASKGIEEKTGIFVSQIAKKFISLENLCFLAGPSFAKEIILGLPCALAIHSCNPILAQKFANQMPSFIKPYIEDDIIGGEVASAYKNVIAIAGGICDGLNLGQNAKASLLSRGLVEMCKFGEYFGAKMQTFLGLSGAGDLFLTANSLLSRNYRVGLGLAQNNRLEDILRDLGEVAEGIKTSQAITQISEKEGIYTPIATEIQKIIQGKSPLESMSTLMKK.

The NADPH site is built by tryptophan 11, arginine 30, arginine 31, and lysine 95. Sn-glycerol 3-phosphate-binding residues include lysine 95, glycine 123, and serine 125. Alanine 127 provides a ligand contact to NADPH. The sn-glycerol 3-phosphate site is built by lysine 177, aspartate 230, serine 240, arginine 241, and asparagine 242. The active-site Proton acceptor is lysine 177. Arginine 241 serves as a coordination point for NADPH. 2 residues coordinate NADPH: valine 265 and glutamate 267.

It belongs to the NAD-dependent glycerol-3-phosphate dehydrogenase family.

Its subcellular location is the cytoplasm. The enzyme catalyses sn-glycerol 3-phosphate + NAD(+) = dihydroxyacetone phosphate + NADH + H(+). It carries out the reaction sn-glycerol 3-phosphate + NADP(+) = dihydroxyacetone phosphate + NADPH + H(+). Its pathway is membrane lipid metabolism; glycerophospholipid metabolism. Functionally, catalyzes the reduction of the glycolytic intermediate dihydroxyacetone phosphate (DHAP) to sn-glycerol 3-phosphate (G3P), the key precursor for phospholipid synthesis. The chain is Glycerol-3-phosphate dehydrogenase [NAD(P)+] from Bartonella bacilliformis (strain ATCC 35685 / KC583 / Herrer 020/F12,63).